The sequence spans 276 residues: Bis(5'-nucleosyl)-tetraphosphatase, symmetrical (276 aa).

This sequence belongs to the Ap4A hydrolase family.

It carries out the reaction P(1),P(4)-bis(5'-adenosyl) tetraphosphate + H2O = 2 ADP + 2 H(+). Functionally, hydrolyzes diadenosine 5',5'''-P1,P4-tetraphosphate to yield ADP. The chain is Bis(5'-nucleosyl)-tetraphosphatase, symmetrical from Dechloromonas aromatica (strain RCB).